The primary structure comprises 243 residues: tRNA (guanine-N(1)-)-methyltransferase (243 aa).

S-adenosyl-L-methionine contacts are provided by residues glycine 108 and 127 to 132 (LGDFVL).

This sequence belongs to the RNA methyltransferase TrmD family. In terms of assembly, homodimer.

Its subcellular location is the cytoplasm. It catalyses the reaction guanosine(37) in tRNA + S-adenosyl-L-methionine = N(1)-methylguanosine(37) in tRNA + S-adenosyl-L-homocysteine + H(+). Its function is as follows. Specifically methylates guanosine-37 in various tRNAs. The chain is tRNA (guanine-N(1)-)-methyltransferase from Streptococcus equi subsp. zooepidemicus (strain MGCS10565).